We begin with the raw amino-acid sequence, 273 residues long: Urease accessory protein UreD (273 aa).

This sequence belongs to the UreD family. In terms of assembly, ureD, UreF and UreG form a complex that acts as a GTP-hydrolysis-dependent molecular chaperone, activating the urease apoprotein by helping to assemble the nickel containing metallocenter of UreC. The UreE protein probably delivers the nickel.

It localises to the cytoplasm. Functionally, required for maturation of urease via the functional incorporation of the urease nickel metallocenter. This is Urease accessory protein UreD from Rhizobium johnstonii (strain DSM 114642 / LMG 32736 / 3841) (Rhizobium leguminosarum bv. viciae).